A 423-amino-acid polypeptide reads, in one-letter code: Histidine--tRNA ligase 2 (423 aa).

Belongs to the class-II aminoacyl-tRNA synthetase family. In terms of assembly, homodimer.

The protein resides in the cytoplasm. The enzyme catalyses tRNA(His) + L-histidine + ATP = L-histidyl-tRNA(His) + AMP + diphosphate + H(+). The polypeptide is Histidine--tRNA ligase 2 (Bacillus cereus (strain ATCC 10987 / NRS 248)).